Reading from the N-terminus, the 328-residue chain is Malate dehydrogenase (328 aa).

Position 11–17 (11–17 (GAAGQIG)) interacts with NAD(+). Residues arginine 94 and arginine 100 each coordinate substrate. NAD(+)-binding positions include asparagine 107, glutamine 114, and 131-133 (VGN). 2 residues coordinate substrate: asparagine 133 and arginine 164. Catalysis depends on histidine 189, which acts as the Proton acceptor.

It belongs to the LDH/MDH superfamily. MDH type 2 family.

The enzyme catalyses (S)-malate + NAD(+) = oxaloacetate + NADH + H(+). In terms of biological role, catalyzes the reversible oxidation of malate to oxaloacetate. The sequence is that of Malate dehydrogenase from Xylella fastidiosa (strain M12).